Consider the following 356-residue polypeptide: DNA integrity scanning protein DisA (356 aa).

Residues 7–147 enclose the DAC domain; the sequence is NKNMLYALKM…EKYVVEDISK (141 aa). Residues Gly-74, Leu-92, and 105 to 109 each bind ATP; that span reads TRHRT.

Belongs to the DisA family. As to quaternary structure, homooctamer. Mg(2+) is required as a cofactor.

It catalyses the reaction 2 ATP = 3',3'-c-di-AMP + 2 diphosphate. Participates in a DNA-damage check-point that is active prior to asymmetric division when DNA is damaged. DisA forms globular foci that rapidly scan along the chromosomes during sporulation, searching for lesions. When a lesion is present, DisA pauses at the lesion site. This triggers a cellular response that culminates in a temporary block in sporulation initiation. In terms of biological role, also has diadenylate cyclase activity, catalyzing the condensation of 2 ATP molecules into cyclic di-AMP (c-di-AMP). c-di-AMP acts as a signaling molecule that couples DNA integrity with progression of sporulation. The rise in c-di-AMP level generated by DisA while scanning the chromosome, operates as a positive signal that advances sporulation; upon encountering a lesion, the DisA focus arrests at the damaged site and halts c-di-AMP synthesis. This Clostridioides difficile (strain 630) (Peptoclostridium difficile) protein is DNA integrity scanning protein DisA.